Reading from the N-terminus, the 354-residue chain is Carbamoyl phosphate synthase arginine-specific small chain (354 aa).

The segment at 1–163 (MKAYLHVASG…RTIETYGEGG (163 aa)) is CPSase. L-glutamine-binding residues include serine 46, glycine 213, and glycine 215. Residues 165–352 (HLVLVDFGYK…LQTVFKGENV (188 aa)) form the Glutamine amidotransferase type-1 domain. Cysteine 240 serves as the catalytic Nucleophile. The L-glutamine site is built by leucine 241, glutamine 244, asparagine 282, and tyrosine 285. Active-site residues include histidine 325 and glutamate 327.

It belongs to the CarA family. Composed of two chains; the small (or glutamine) chain promotes the hydrolysis of glutamine to ammonia, which is used by the large (or ammonia) chain to synthesize carbamoyl phosphate. Tetramer of heterodimers (alpha,beta)4.

It catalyses the reaction hydrogencarbonate + L-glutamine + 2 ATP + H2O = carbamoyl phosphate + L-glutamate + 2 ADP + phosphate + 2 H(+). The catalysed reaction is L-glutamine + H2O = L-glutamate + NH4(+). It participates in amino-acid biosynthesis; L-arginine biosynthesis; carbamoyl phosphate from bicarbonate: step 1/1. Small subunit of the glutamine-dependent carbamoyl phosphate synthetase (CPSase). CPSase catalyzes the formation of carbamoyl phosphate from the ammonia moiety of glutamine, carbonate, and phosphate donated by ATP, constituting the first step of the biosynthetic pathway leading to arginine and/or urea. The small subunit (glutamine amidotransferase) binds and cleaves glutamine to supply the large subunit with the substrate ammonia. The polypeptide is Carbamoyl phosphate synthase arginine-specific small chain (Geobacillus stearothermophilus (Bacillus stearothermophilus)).